Reading from the N-terminus, the 168-residue chain is MRCPFCQDAENKVIDSRESHEGSVIRRRRECLTCKRRFTTYERVEELYPLIVKKDGRREAFDREKIVNGLKKACEKRPVSADQLEETVVAIERQLQGMGEKEVPSSVIGEEIMRRLRQLDEVAYVRFASVYRSFRDIAEFMDELKALREAEAREQRQAPPSAPVDKGG.

The segment at 3 to 34 (CPFCQDAENKVIDSRESHEGSVIRRRRECLTC) is a zinc-finger region. One can recognise an ATP-cone domain in the interval 49 to 139 (PLIVKKDGRR…VYRSFRDIAE (91 aa)).

Belongs to the NrdR family. Zn(2+) is required as a cofactor.

In terms of biological role, negatively regulates transcription of bacterial ribonucleotide reductase nrd genes and operons by binding to NrdR-boxes. This Myxococcus xanthus (strain DK1622) protein is Transcriptional repressor NrdR.